Consider the following 291-residue polypeptide: Alpha-soluble NSF attachment protein (291 aa).

4 TPR repeats span residues 14 to 51 (ADKR…FKMS), 77 to 110 (AASS…YTDE), 117 to 150 (AKHQ…FDGE), and 157 to 190 (HQCL…SLDN).

This sequence belongs to the SNAP family. In terms of assembly, interacts with nsfA and probably SNARE proteins.

The protein resides in the cytoplasmic vesicle membrane. In terms of biological role, may be required for vesicular transport between the endoplasmic reticulum and the Golgi apparatus. Involved in vesicle fusion with nsfA and probably SNARE proteins. The sequence is that of Alpha-soluble NSF attachment protein (snpA) from Dictyostelium discoideum (Social amoeba).